A 320-amino-acid chain; its full sequence is 4-diphosphocytidyl-2-C-methyl-D-erythritol kinase (320 aa).

Lysine 26 is a catalytic residue. Proline 111 to alanine 121 serves as a coordination point for ATP. Aspartate 153 is an active-site residue.

Belongs to the GHMP kinase family. IspE subfamily.

The catalysed reaction is 4-CDP-2-C-methyl-D-erythritol + ATP = 4-CDP-2-C-methyl-D-erythritol 2-phosphate + ADP + H(+). It participates in isoprenoid biosynthesis; isopentenyl diphosphate biosynthesis via DXP pathway; isopentenyl diphosphate from 1-deoxy-D-xylulose 5-phosphate: step 3/6. Catalyzes the phosphorylation of the position 2 hydroxy group of 4-diphosphocytidyl-2C-methyl-D-erythritol. In Mycobacterium marinum (strain ATCC BAA-535 / M), this protein is 4-diphosphocytidyl-2-C-methyl-D-erythritol kinase.